A 635-amino-acid polypeptide reads, in one-letter code: MEAVVRRCPFLARVSQAFLQKAGPSLLFYAQHCPKMMEAAPPAAARGLATSASRGQQVEETPAAQPEAKKAKEVAQQNTDGSQPPAGHPPAAAVQSSATKCPFLAAQMNHKSSNVFCKASLELQEDVKEMQVDRKGKEFAKIPTNSVVRNTEAEGEEQSGLLKKFKDIMLKQRPESVSHLLQDNLPKSVSTFQYDQFFEKKIDEKKKDHTYRVFKTVNRKAQIFPMADDYSDSLITKKEVSVWCSNDYLGMSRHPRVCGAVMDTLKQHGAGAGGTRNISGTSKFHVDLEKELADLHGKDAALLFSSCFVANDSTLFTLAKMLPGCEIYSDSGNHASMIQGIRNSRVPKHIFRHNDVNHLRELLKKSDPSTPKIVAFETVHSMDGAVCPLEELCDVAHEHGAITFVDEVHAVGLYGARGGGIGDRDGVMHKMDIISGTLGKAFACVGGYISSTSALIDTVRSYAAGFIFTTSLPPMLLAGALESVRTLKSAEGQVLRRQHQRNVKLMRQMLMDAGLPVVHCPSHIIPIRVADAAKNTEICDKLMSQHSIYVQAINYPTVPRGEELLRIAPTPHHTPQMMSYFLEKLLATWKDVGLELKPHSSAECNFCRRPLHFEVMSERERSYFSGMSKLLSVSA.

The transit peptide at 1–56 directs the protein to the mitochondrion; sequence MEAVVRRCPFLARVSQAFLQKAGPSLLFYAQHCPKMMEAAPPAAARGLATSASRGQ. Over residues 44 to 66 the composition is skewed to low complexity; it reads AARGLATSASRGQQVEETPAAQP. Residues 44–94 are disordered; it reads AARGLATSASRGQQVEETPAAQPEAKKAKEVAQQNTDGSQPPAGHPPAAAV. Positions 212, 329, and 348 each coordinate substrate. Residues serine 381, histidine 409, and threonine 437 each coordinate pyridoxal 5'-phosphate. Lysine 440 is an active-site residue. Lysine 440 carries the N6-(pyridoxal phosphate)lysine modification. Positions 469 and 470 each coordinate pyridoxal 5'-phosphate. Substrate is bound at residue threonine 557.

This sequence belongs to the class-II pyridoxal-phosphate-dependent aminotransferase family. In terms of assembly, homodimer. Requires pyridoxal 5'-phosphate as cofactor. Ubiquitous.

It localises to the mitochondrion inner membrane. It catalyses the reaction succinyl-CoA + glycine + H(+) = 5-aminolevulinate + CO2 + CoA. Its pathway is porphyrin-containing compound metabolism; protoporphyrin-IX biosynthesis; 5-aminolevulinate from glycine: step 1/1. In terms of biological role, catalyzes the pyridoxal 5'-phosphate (PLP)-dependent condensation of succinyl-CoA and glycine to form aminolevulinic acid (ALA), with CoA and CO2 as by-products. The polypeptide is 5-aminolevulinate synthase, non-specific, mitochondrial (ALAS1) (Gallus gallus (Chicken)).